The primary structure comprises 225 residues: 3-dehydroquinate dehydratase (225 aa).

3-dehydroquinate-binding positions include 30–32 and Arg-62; that span reads EWR. His-118 (proton donor/acceptor) is an active-site residue. Lys-143 functions as the Schiff-base intermediate with substrate in the catalytic mechanism. 3-dehydroquinate is bound by residues Arg-186, Ser-205, and Gln-209.

Belongs to the type-I 3-dehydroquinase family. Homodimer.

The enzyme catalyses 3-dehydroquinate = 3-dehydroshikimate + H2O. The protein operates within metabolic intermediate biosynthesis; chorismate biosynthesis; chorismate from D-erythrose 4-phosphate and phosphoenolpyruvate: step 3/7. Its function is as follows. Involved in the third step of the chorismate pathway, which leads to the biosynthesis of aromatic amino acids. Catalyzes the cis-dehydration of 3-dehydroquinate (DHQ) and introduces the first double bond of the aromatic ring to yield 3-dehydroshikimate. This chain is 3-dehydroquinate dehydratase, found in Streptococcus thermophilus (strain ATCC BAA-250 / LMG 18311).